Reading from the N-terminus, the 512-residue chain is Chlorogenic acid esterase (512 aa).

The first 18 residues, 1-18 (MLLRLCIIATLLVSHCVA), serve as a signal peptide directing secretion. 3 N-linked (GlcNAc...) asparagine glycosylation sites follow: asparagine 47, asparagine 80, and asparagine 98. Cysteine 92 and cysteine 120 form a disulfide bridge. Serine 230 acts as the Acyl-ester intermediate in catalysis. N-linked (GlcNAc...) asparagine glycosylation occurs at asparagine 271. Cysteine 281 and cysteine 292 are oxidised to a cystine. Residues asparagine 295, asparagine 322, and asparagine 328 are each glycosylated (N-linked (GlcNAc...) asparagine). Catalysis depends on glutamate 351, which acts as the Charge relay system. N-linked (GlcNAc...) asparagine glycans are attached at residues asparagine 391 and asparagine 402. Histidine 416 functions as the Charge relay system in the catalytic mechanism. The N-linked (GlcNAc...) asparagine glycan is linked to asparagine 474.

This sequence belongs to the type-B carboxylesterase/lipase family.

Its subcellular location is the secreted. It catalyses the reaction chlorogenate + H2O = L-quinate + (E)-caffeate + H(+). Functionally, extracellular chlorogenic acid esterase that releases caffeic acid from chlorogenic acid (CGA) contained in natural substrates such as apple marc and coffee pulp. Shows no activity towards 5-O-p-coumaroyl quinic acid, another quinic ester derivative, and rosmarinic acid, another caffeic ester derivative. This chain is Chlorogenic acid esterase, found in Aspergillus niger.